Reading from the N-terminus, the 1357-residue chain is DNA-directed RNA polymerase subunit beta (1357 aa).

Belongs to the RNA polymerase beta chain family. In terms of assembly, the RNAP catalytic core consists of 2 alpha, 1 beta, 1 beta' and 1 omega subunit. When a sigma factor is associated with the core the holoenzyme is formed, which can initiate transcription.

The enzyme catalyses RNA(n) + a ribonucleoside 5'-triphosphate = RNA(n+1) + diphosphate. Its function is as follows. DNA-dependent RNA polymerase catalyzes the transcription of DNA into RNA using the four ribonucleoside triphosphates as substrates. The protein is DNA-directed RNA polymerase subunit beta of Pseudomonas entomophila (strain L48).